The chain runs to 162 residues: Large ribosomal subunit protein uL10 (162 aa).

The protein belongs to the universal ribosomal protein uL10 family. In terms of assembly, part of the ribosomal stalk of the 50S ribosomal subunit. The N-terminus interacts with L11 and the large rRNA to form the base of the stalk. The C-terminus forms an elongated spine to which L12 dimers bind in a sequential fashion forming a multimeric L10(L12)X complex.

Forms part of the ribosomal stalk, playing a central role in the interaction of the ribosome with GTP-bound translation factors. The protein is Large ribosomal subunit protein uL10 of Vibrio parahaemolyticus serotype O3:K6 (strain RIMD 2210633).